The primary structure comprises 174 residues: ATP-dependent protease subunit HslV (174 aa).

Threonine 2 is an active-site residue. Na(+) contacts are provided by glycine 157, cysteine 160, and threonine 163.

Belongs to the peptidase T1B family. HslV subfamily. A double ring-shaped homohexamer of HslV is capped on each side by a ring-shaped HslU homohexamer. The assembly of the HslU/HslV complex is dependent on binding of ATP.

Its subcellular location is the cytoplasm. The enzyme catalyses ATP-dependent cleavage of peptide bonds with broad specificity.. Allosterically activated by HslU binding. In terms of biological role, protease subunit of a proteasome-like degradation complex believed to be a general protein degrading machinery. This chain is ATP-dependent protease subunit HslV, found in Shewanella sediminis (strain HAW-EB3).